The chain runs to 406 residues: RILP-like protein 1 (406 aa).

Residues 5 to 99 (QLGAALDKSA…LEKEKKHKKE (95 aa)) form the RH1 domain. Residues 105 to 319 (DVWRGEAQDL…KVFMLQEEIA (215 aa)) are a coiled coil. Disordered regions lie at residues 234–272 (EVSS…PAQE) and 323–351 (SEEQ…NFQP). Residues 241-257 (EVSRLKEKLKEQSRSNE) show a composition bias toward basic and acidic residues. The region spanning 289-358 (RPRFTLQELR…FQPESGIKRL (70 aa)) is the RH2 domain. Residues 340–351 (TLRTNPRSNFQP) show a composition bias toward polar residues.

It belongs to the RILPL family.

The protein resides in the cytoplasm. It localises to the cytosol. The protein localises to the cytoskeleton. Its subcellular location is the microtubule organizing center. It is found in the centrosome. The protein resides in the cell projection. It localises to the cilium. Functionally, plays a role in the regulation of cell shape and polarity. Plays a role in cellular protein transport, including protein transport away from primary cilia. Neuroprotective protein. This is RILP-like protein 1 (rilpl1) from Danio rerio (Zebrafish).